Here is a 351-residue protein sequence, read N- to C-terminus: L-threonine 3-dehydrogenase (351 aa).

Position 39 (C39) interacts with Zn(2+). Active-site charge relay system residues include T41 and H44. Positions 64, 65, 94, 97, 100, and 108 each coordinate Zn(2+). Residues I176, D196, R201, 271-273 (LGI), and 295-296 (IY) contribute to the NAD(+) site.

It belongs to the zinc-containing alcohol dehydrogenase family. In terms of assembly, homotetramer. Zn(2+) is required as a cofactor.

It is found in the cytoplasm. The catalysed reaction is L-threonine + NAD(+) = (2S)-2-amino-3-oxobutanoate + NADH + H(+). It participates in amino-acid degradation; L-threonine degradation via oxydo-reductase pathway; glycine from L-threonine: step 1/2. Its function is as follows. Catalyzes the NAD(+)-dependent oxidation of L-threonine to 2-amino-3-ketobutyrate. In Francisella tularensis subsp. tularensis (strain SCHU S4 / Schu 4), this protein is L-threonine 3-dehydrogenase.